The sequence spans 112 residues: Large ribosomal subunit protein eL33w (112 aa).

It belongs to the eukaryotic ribosomal protein eL33 family.

This Arabidopsis thaliana (Mouse-ear cress) protein is Large ribosomal subunit protein eL33w (RPL35AA).